The following is an 823-amino-acid chain: Protein ROOT HAIR DEFECTIVE 3 homolog 2 (823 aa).

Residues 1–688 (MEVPISGGGG…EAHRRSNNWL (688 aa)) lie on the Cytoplasmic side of the membrane. Residues 45 to 260 (GLSYAVVSIV…IAPGGLAADR (216 aa)) form the GB1/RHD3-type G domain. 55-62 (GPQGSGKS) is a GTP binding site. Positions 226–246 (LSSYEEKENLFKEQVGQLRQR) form a coiled coil. Residues 689–709 (PPAWTVLLLAILGYNEFIFLL) traverse the membrane as a helical segment. At 710–712 (RNP) the chain is on the lumenal side. A helical transmembrane segment spans residues 713-733 (LYLLGLFVAFVVSYAAWLQYD). At 734–823 (ITAYFRHGTL…SVGSNSDDES (90 aa)) the chain is on the cytoplasmic side. The segment at 770–823 (NQKSSSHPPRHRPPLHPQSFRNQAQQQSQAQVQYQAPSSLSSSSSVGSNSDDES) is disordered. The span at 786-823 (PQSFRNQAQQQSQAQVQYQAPSSLSSSSSVGSNSDDES) shows a compositional bias: low complexity.

It belongs to the TRAFAC class dynamin-like GTPase superfamily. GB1/RHD3 GTPase family. RHD3 subfamily.

Its subcellular location is the endoplasmic reticulum membrane. Probable GTP-binding protein that may be involved in cell development. This Oryza sativa subsp. japonica (Rice) protein is Protein ROOT HAIR DEFECTIVE 3 homolog 2.